The following is a 98-amino-acid chain: NADH-ubiquinone oxidoreductase chain 4L (98 aa).

The next 3 helical transmembrane spans lie at 1-21 (MSLV…GLLM), 29-49 (SLLC…LTIL), and 61-81 (IILL…LVMV).

This sequence belongs to the complex I subunit 4L family. As to quaternary structure, core subunit of respiratory chain NADH dehydrogenase (Complex I) which is composed of 45 different subunits.

The protein localises to the mitochondrion inner membrane. It catalyses the reaction a ubiquinone + NADH + 5 H(+)(in) = a ubiquinol + NAD(+) + 4 H(+)(out). Core subunit of the mitochondrial membrane respiratory chain NADH dehydrogenase (Complex I) which catalyzes electron transfer from NADH through the respiratory chain, using ubiquinone as an electron acceptor. Part of the enzyme membrane arm which is embedded in the lipid bilayer and involved in proton translocation. This is NADH-ubiquinone oxidoreductase chain 4L (MT-ND4L) from Rangifer tarandus (Reindeer).